The chain runs to 83 residues: Short neurotoxin VAN-29 (83 aa).

The N-terminal stretch at 1–21 is a signal peptide; the sequence is MKTLLLTLVVVTIVCLDLGYT. 4 cysteine pairs are disulfide-bonded: cysteine 24–cysteine 45, cysteine 38–cysteine 62, cysteine 64–cysteine 75, and cysteine 76–cysteine 81.

This sequence belongs to the three-finger toxin family. Short-chain subfamily. Type I alpha-neurotoxin sub-subfamily. Expressed by the venom gland.

The protein localises to the secreted. In terms of biological role, binds to muscle nicotinic acetylcholine receptor (nAChR) and inhibit acetylcholine from binding to the receptor, thereby impairing neuromuscular transmission. The polypeptide is Short neurotoxin VAN-29 (Laticauda laticaudata (Blue-ringed sea krait)).